Here is a 248-residue protein sequence, read N- to C-terminus: Granzyme B (248 aa).

The first 18 residues, 1–18 (MKLLLLLLSFSLAPKTEA), serve as a signal peptide directing secretion. The propeptide at 19 to 20 (GE) is activation peptide. Residues 21 to 246 (IIGGHEAKPH…FLSWIKKTMK (226 aa)) enclose the Peptidase S1 domain. Residues C50 and C66 are joined by a disulfide bond. Residues H65 and D109 each act as charge relay system in the active site. Disulfide bonds link C143/C210 and C174/C189. The active-site Charge relay system is the S204.

The protein belongs to the peptidase S1 family. Granzyme subfamily.

The protein resides in the secreted. It is found in the cytolytic granule. It carries out the reaction Preferential cleavage: -Asp-|-Xaa- &gt;&gt; -Asn-|-Xaa- &gt; -Met-|-Xaa-, -Ser-|-Xaa-.. Its activity is regulated as follows. Inactivated by the serine protease inhibitor diisopropylfluorophosphate. Functionally, abundant protease in the cytosolic granules of cytotoxic T-cells and NK-cells which activates caspase-independent pyroptosis when delivered into the target cell through the immunological synapse. It cleaves after Asp. Once delivered into the target cell, acts by catalyzing cleavage of gasdermin-E (GSDME), releasing the pore-forming moiety of GSDME, thereby triggering pyroptosis and target cell death. Seems to be linked to an activation cascade of caspases (aspartate-specific cysteine proteases) responsible for apoptosis execution. Cleaves caspase-3 and -9 (CASP3 and CASP9, respectively) to give rise to active enzymes mediating apoptosis. Cleaves and activates CASP7 in response to bacterial infection, promoting plasma membrane repair. This is Granzyme B (Gzmb) from Rattus norvegicus (Rat).